Here is a 288-residue protein sequence, read N- to C-terminus: uncharacterized protein (288 aa).

A run of 4 helical transmembrane segments spans residues 43 to 63 (LFTLSFIPSIIYCIFILNYII), 190 to 210 (LFIFFGTPVIILFWFVTFLLE), 243 to 263 (GIPIILQPVIIILIPELSILI), and 265 to 285 (LLQMFTTFLVFVAILQINKSL).

It localises to the cell membrane. This is an uncharacterized protein from Rickettsia prowazekii (strain Madrid E).